A 237-amino-acid polypeptide reads, in one-letter code: Phosphoribosylaminoimidazole-succinocarboxamide synthase (237 aa).

Belongs to the SAICAR synthetase family.

It catalyses the reaction 5-amino-1-(5-phospho-D-ribosyl)imidazole-4-carboxylate + L-aspartate + ATP = (2S)-2-[5-amino-1-(5-phospho-beta-D-ribosyl)imidazole-4-carboxamido]succinate + ADP + phosphate + 2 H(+). It functions in the pathway purine metabolism; IMP biosynthesis via de novo pathway; 5-amino-1-(5-phospho-D-ribosyl)imidazole-4-carboxamide from 5-amino-1-(5-phospho-D-ribosyl)imidazole-4-carboxylate: step 1/2. The protein is Phosphoribosylaminoimidazole-succinocarboxamide synthase of Halalkalibacterium halodurans (strain ATCC BAA-125 / DSM 18197 / FERM 7344 / JCM 9153 / C-125) (Bacillus halodurans).